Here is a 138-residue protein sequence, read N- to C-terminus: MASLPEPQKLARNFARCNDWEEKYLYVIELGERLDPLPDEWRNPENLISGCQSQVWIVTQPDEQGVLILHGDSDAAIVKGLIAVVFSLYQGLTAQEIVELDVRPFFESLALNQHLTPSRSQGLEAMLRAIRAHAAALL.

Cys51 (cysteine persulfide intermediate) is an active-site residue.

The protein belongs to the SufE family. As to quaternary structure, homodimer. Interacts with SufS.

Its subcellular location is the cytoplasm. Its pathway is cofactor biosynthesis; iron-sulfur cluster biosynthesis. In terms of biological role, participates in cysteine desulfuration mediated by SufS. Cysteine desulfuration mobilizes sulfur from L-cysteine to yield L-alanine and constitutes an essential step in sulfur metabolism for biosynthesis of a variety of sulfur-containing biomolecules. Functions as a sulfur acceptor for SufS, by mediating the direct transfer of the sulfur atom from the S-sulfanylcysteine of SufS, an intermediate product of cysteine desulfuration process. The sequence is that of Cysteine desulfuration protein SufE from Pectobacterium atrosepticum (strain SCRI 1043 / ATCC BAA-672) (Erwinia carotovora subsp. atroseptica).